The primary structure comprises 359 residues: Phosphoserine aminotransferase (359 aa).

R41 contacts L-glutamate. Pyridoxal 5'-phosphate contacts are provided by residues 75-76 (AS), W101, T151, D171, and Q194. K195 is modified (N6-(pyridoxal phosphate)lysine). 236–237 (NT) lines the pyridoxal 5'-phosphate pocket.

This sequence belongs to the class-V pyridoxal-phosphate-dependent aminotransferase family. SerC subfamily. In terms of assembly, homodimer. Requires pyridoxal 5'-phosphate as cofactor.

It is found in the cytoplasm. The enzyme catalyses O-phospho-L-serine + 2-oxoglutarate = 3-phosphooxypyruvate + L-glutamate. It carries out the reaction 4-(phosphooxy)-L-threonine + 2-oxoglutarate = (R)-3-hydroxy-2-oxo-4-phosphooxybutanoate + L-glutamate. It participates in amino-acid biosynthesis; L-serine biosynthesis; L-serine from 3-phospho-D-glycerate: step 2/3. The protein operates within cofactor biosynthesis; pyridoxine 5'-phosphate biosynthesis; pyridoxine 5'-phosphate from D-erythrose 4-phosphate: step 3/5. Functionally, catalyzes the reversible conversion of 3-phosphohydroxypyruvate to phosphoserine and of 3-hydroxy-2-oxo-4-phosphonooxybutanoate to phosphohydroxythreonine. The chain is Phosphoserine aminotransferase from Thiobacillus denitrificans (strain ATCC 25259 / T1).